The sequence spans 402 residues: 4-hydroxy-3-methylbut-2-enyl diphosphate reductase (402 aa).

Cysteine 66 lines the [4Fe-4S] cluster pocket. Histidine 96 contacts (2E)-4-hydroxy-3-methylbut-2-enyl diphosphate. Residue histidine 96 participates in dimethylallyl diphosphate binding. Histidine 96 serves as a coordination point for isopentenyl diphosphate. Cysteine 157 lines the [4Fe-4S] cluster pocket. Histidine 185 provides a ligand contact to (2E)-4-hydroxy-3-methylbut-2-enyl diphosphate. Position 185 (histidine 185) interacts with dimethylallyl diphosphate. Histidine 185 lines the isopentenyl diphosphate pocket. The active-site Proton donor is glutamate 187. Threonine 250 contacts (2E)-4-hydroxy-3-methylbut-2-enyl diphosphate. A [4Fe-4S] cluster-binding site is contributed by cysteine 288. (2E)-4-hydroxy-3-methylbut-2-enyl diphosphate-binding residues include serine 317, serine 318, asparagine 319, and serine 379. Serine 317, serine 318, asparagine 319, and serine 379 together coordinate dimethylallyl diphosphate. Positions 317, 318, 319, and 379 each coordinate isopentenyl diphosphate.

Belongs to the IspH family. [4Fe-4S] cluster serves as cofactor.

The enzyme catalyses isopentenyl diphosphate + 2 oxidized [2Fe-2S]-[ferredoxin] + H2O = (2E)-4-hydroxy-3-methylbut-2-enyl diphosphate + 2 reduced [2Fe-2S]-[ferredoxin] + 2 H(+). It carries out the reaction dimethylallyl diphosphate + 2 oxidized [2Fe-2S]-[ferredoxin] + H2O = (2E)-4-hydroxy-3-methylbut-2-enyl diphosphate + 2 reduced [2Fe-2S]-[ferredoxin] + 2 H(+). The protein operates within isoprenoid biosynthesis; dimethylallyl diphosphate biosynthesis; dimethylallyl diphosphate from (2E)-4-hydroxy-3-methylbutenyl diphosphate: step 1/1. Its pathway is isoprenoid biosynthesis; isopentenyl diphosphate biosynthesis via DXP pathway; isopentenyl diphosphate from 1-deoxy-D-xylulose 5-phosphate: step 6/6. Its function is as follows. Catalyzes the conversion of 1-hydroxy-2-methyl-2-(E)-butenyl 4-diphosphate (HMBPP) into a mixture of isopentenyl diphosphate (IPP) and dimethylallyl diphosphate (DMAPP). Acts in the terminal step of the DOXP/MEP pathway for isoprenoid precursor biosynthesis. This is 4-hydroxy-3-methylbut-2-enyl diphosphate reductase from Crocosphaera subtropica (strain ATCC 51142 / BH68) (Cyanothece sp. (strain ATCC 51142)).